The sequence spans 175 residues: Nucleoside triphosphate/diphosphate phosphatase (175 aa).

The active-site Proton donor is the Arg23. 6 residues coordinate Mg(2+): Asn87, Asp103, Asp105, Asp107, Asp120, and Glu123.

Belongs to the Ntdp family. Requires Mg(2+) as cofactor.

It carries out the reaction a ribonucleoside 5'-triphosphate + H2O = a ribonucleoside 5'-diphosphate + phosphate + H(+). The catalysed reaction is a ribonucleoside 5'-diphosphate + H2O = a ribonucleoside 5'-phosphate + phosphate + H(+). In terms of biological role, has nucleoside phosphatase activity towards nucleoside triphosphates and nucleoside diphosphates. This chain is Nucleoside triphosphate/diphosphate phosphatase, found in Oceanobacillus iheyensis (strain DSM 14371 / CIP 107618 / JCM 11309 / KCTC 3954 / HTE831).